A 445-amino-acid chain; its full sequence is Phosphoglucosamine mutase (445 aa).

Ser-101 acts as the Phosphoserine intermediate in catalysis. Ser-101, Asp-240, Asp-242, and Asp-244 together coordinate Mg(2+). Phosphoserine is present on Ser-101.

The protein belongs to the phosphohexose mutase family. Mg(2+) is required as a cofactor. In terms of processing, activated by phosphorylation.

The enzyme catalyses alpha-D-glucosamine 1-phosphate = D-glucosamine 6-phosphate. Its function is as follows. Catalyzes the conversion of glucosamine-6-phosphate to glucosamine-1-phosphate. This is Phosphoglucosamine mutase from Pseudomonas aeruginosa (strain UCBPP-PA14).